The primary structure comprises 506 residues: Cytochrome P450 monooxygenase TES1 (506 aa).

Residues 26–46 (MSVVLAGLILLASIYFPRFMF) traverse the membrane as a helical segment. Asn-167, Asn-201, Asn-298, and Asn-427 each carry an N-linked (GlcNAc...) asparagine glycan. Heme is bound at residue Cys-440.

Belongs to the cytochrome P450 family. It depends on heme as a cofactor.

It localises to the membrane. It functions in the pathway phytotoxin biosynthesis. In terms of biological role, cytochrome P450 monooxygenase; part of the gene cluster that mediates the biosynthesis of the phytotoxin tentoxin, an inhibitor the F1-ATPase activity of chloroplasts, resulting in chlorosis in sensitive plants. Tentoxin is a cyclic tetrapeptide that consists of four amino acid residues: glycine (Gly), alanine (Ala), leucine (Leu), and dehydrophenylalanine (DPhe). In addition, both the Ala and DPhe residues are N-methylated. The nonribosomal peptide synthetase TES assembles tentoxin from the four substrate amino acids. The adenylation domains of each of the 4 modules are responsible for the activation of Gly, Ala, Leu and DPhe, respectively. In addition, the N-methyltransferase domains in the second and fourth modules of TES could be responsible for N-methylation of Ala and DPhe residues. Finally, the condensation domain located in the termination module probably catalyzes the formation of the intramolecular macrocyclization and then the release of tentoxin. The cytochrome P450 monooxygenase TES1 is predicted to be involved in the formation of DPhe. This is Cytochrome P450 monooxygenase TES1 from Alternaria alternata (Alternaria rot fungus).